Consider the following 394-residue polypeptide: Cell division protein FtsZ (394 aa).

Residues 21–25 (GGGNN), 108–110 (GTG), Glu139, Arg143, and Asp187 each bind GTP. The interval 317 to 394 (DKPSSQGRKA…EERRSRRTRR (78 aa)) is disordered. 2 stretches are compositionally biased toward low complexity: residues 328-346 (STGF…SGAS) and 353-364 (SAHTSHSQSSES). Basic and acidic residues predominate over residues 365-388 (VNERSHTTKDDDIPSFIRNREERR).

It belongs to the FtsZ family. As to quaternary structure, homodimer. Polymerizes to form a dynamic ring structure in a strictly GTP-dependent manner. Interacts directly with several other division proteins.

It is found in the cytoplasm. Functionally, essential cell division protein that forms a contractile ring structure (Z ring) at the future cell division site. The regulation of the ring assembly controls the timing and the location of cell division. One of the functions of the FtsZ ring is to recruit other cell division proteins to the septum to produce a new cell wall between the dividing cells. Binds GTP and shows GTPase activity. The protein is Cell division protein FtsZ of Staphylococcus epidermidis (strain ATCC 12228 / FDA PCI 1200).